We begin with the raw amino-acid sequence, 724 residues long: NAD(+) hydrolase SARM1 (724 aa).

The N-terminal 27 residues, 1 to 27, are a transit peptide targeting the mitochondrion; it reads MVLTLLFSAYKLCRFFTMSGPRPGADR. A disordered region spans residues 24-56; the sequence is GADRLTVPGPDRSGGASPWWAAGGRGSREVSPG. Residues 36-45 are compositionally biased toward low complexity; sequence SGGASPWWAA. The stretch at 60 to 100 is one ARM 1 repeat; the sequence is EVQGALERSLPELQQALSELKQASAARAVGAGLAEVFQLVE. Residues tryptophan 103, arginine 110, 149-157, and 190-193 each bind NAD(+); these read EQILVAENR and HMFK. ARM repeat units lie at residues 114-153, 155-193, 196-235, 237-280, 281-314, 315-354, and 359-402; these read QGLC…QILV, ENRD…HMFK, EETC…NCAL, GGQT…LATN, KEVE…CLVD, ASDT…AEAA, and QGKT…EEVP. SAM domains are found at residues 412–476 and 486–548; these read WKEA…LKTF and NLAD…MLHS. A phosphoserine mark is found at serine 548 and serine 558. A TIR domain is found at 560 to 703; that stretch reads DTPDVFISYR…KIIRFLQGRP (144 aa). Residues 569–570 and glutamate 599 each bind NAD(+); that span reads RR. Residue glutamate 642 is part of the active site. The span at 703 to 716 shows a compositional bias: polar residues; sequence PSQDSSAGSDTSLE. The interval 703–724 is disordered; sequence PSQDSSAGSDTSLEGATPMGLP.

This sequence belongs to the SARM1 family. In terms of assembly, homooctamer; forms an octameric ring via SAM domains. Interacts with TICAM1/TRIF and thereby interferes with TICAM1/TRIF function. Interacts with SDC2 (via cytoplasmic domain) and MAPK10/JNK3. Post-translationally, phosphorylation at Ser-548 by JNK kinases (MAPK8, MAPK9 and /or MAPK10) enhance the NAD(+) hydrolase (NADase) activity. Phosphorylation at Ser-548 and subsequent activation takes place in response to oxidative stress conditions and inhibits mitochondrial respiration. In terms of tissue distribution, widely expressed in the brain and neurons (at protein level). Expressed in photoreceptor cells of the neural retina.

It is found in the cytoplasm. Its subcellular location is the cell projection. The protein resides in the axon. The protein localises to the dendrite. It localises to the synapse. It is found in the mitochondrion. The enzyme catalyses NAD(+) + H2O = ADP-D-ribose + nicotinamide + H(+). It catalyses the reaction NAD(+) = cyclic ADP-beta-D-ribose + nicotinamide + H(+). The catalysed reaction is NADP(+) + H2O = ADP-D-ribose 2'-phosphate + nicotinamide + H(+). With respect to regulation, autoinhibited: in the inactive state, the enzymatic TIR domain is held apart by the autoinhibiting ARM repeats. NAD(+)-binding to ARM repeats maintains an inactive state by promoting interaction between ARM repeats and the TIR domain, thereby facilitating inhibition of the enzymatic TIR domain. Following activation, possibly by nicotinamide mononucleotide (NMN), auto-inhibitory interactions are released, allowing self-association of the TIR domains and subsequent activation of the NAD(+) hydrolase (NADase) activity. Self-association of TIR domains is facilitated by the octamer of SAM domains. NAD(+) hydrolase, which plays a key role in axonal degeneration following injury by regulating NAD(+) metabolism. Acts as a negative regulator of MYD88- and TRIF-dependent toll-like receptor signaling pathway by promoting Wallerian degeneration, an injury-induced form of programmed subcellular death which involves degeneration of an axon distal to the injury site. Wallerian degeneration is triggered by NAD(+) depletion: in response to injury, SARM1 is activated and catalyzes cleavage of NAD(+) into ADP-D-ribose (ADPR), cyclic ADPR (cADPR) and nicotinamide; NAD(+) cleavage promoting cytoskeletal degradation and axon destruction. Also able to hydrolyze NADP(+), but not other NAD(+)-related molecules. Can activate neuronal cell death in response to stress. Regulates dendritic arborization through the MAPK4-JNK pathway. Involved in innate immune response: inhibits both TICAM1/TRIF- and MYD88-dependent activation of JUN/AP-1, TRIF-dependent activation of NF-kappa-B and IRF3, and the phosphorylation of MAPK14/p38. This Mus musculus (Mouse) protein is NAD(+) hydrolase SARM1.